An 86-amino-acid polypeptide reads, in one-letter code: ATP synthase subunit c (86 aa).

Transmembrane regions (helical) follow at residues 8–28 (VLGC…GPGI) and 64–84 (TTGL…PLLG).

Belongs to the ATPase C chain family. F-type ATPases have 2 components, F(1) - the catalytic core - and F(0) - the membrane proton channel. F(1) has five subunits: alpha(3), beta(3), gamma(1), delta(1), epsilon(1). F(0) has three main subunits: a(1), b(2) and c(10-14). The alpha and beta chains form an alternating ring which encloses part of the gamma chain. F(1) is attached to F(0) by a central stalk formed by the gamma and epsilon chains, while a peripheral stalk is formed by the delta and b chains.

The protein resides in the cell membrane. F(1)F(0) ATP synthase produces ATP from ADP in the presence of a proton or sodium gradient. F-type ATPases consist of two structural domains, F(1) containing the extramembraneous catalytic core and F(0) containing the membrane proton channel, linked together by a central stalk and a peripheral stalk. During catalysis, ATP synthesis in the catalytic domain of F(1) is coupled via a rotary mechanism of the central stalk subunits to proton translocation. Functionally, key component of the F(0) channel; it plays a direct role in translocation across the membrane. A homomeric c-ring of between 10-14 subunits forms the central stalk rotor element with the F(1) delta and epsilon subunits. This Lachnoclostridium phytofermentans (strain ATCC 700394 / DSM 18823 / ISDg) (Clostridium phytofermentans) protein is ATP synthase subunit c.